A 50-amino-acid chain; its full sequence is MFKRKSTAELVAQMAKLAGNKGGFSSEDKGEWKLKLDNAGNGQAVIRFLP.

As to quaternary structure, homodimer in the absence of DNA, monomer when binding DNA.

Binds preferentially to single-stranded DNA and therefore, destabilizes double-stranded DNA. It is involved in DNA replication, repair and recombination. Binds ss-DNA as the replication fork advances and stimulates the replisome processivity and accuracy. The chain is Single-stranded DNA-binding protein (32) from Enterobacteria phage RB27 (Bacteriophage RB27).